A 479-amino-acid chain; its full sequence is Sulfate adenylyltransferase subunit 1 (479 aa).

In terms of domain architecture, tr-type G spans 25–239 (KSLLRFLTCG…EVLETVDIQR (215 aa)). Residues 34 to 41 (GSVDDGKS) are G1. 34–41 (GSVDDGKS) lines the GTP pocket. A G2 region spans residues 92–96 (GITID). Residues 113 to 116 (DTPG) are G3. Residues 113 to 117 (DTPGH) and 168 to 171 (NKMD) each bind GTP. Residues 168 to 171 (NKMD) form a G4 region. The tract at residues 206–208 (SAL) is G5.

It belongs to the TRAFAC class translation factor GTPase superfamily. Classic translation factor GTPase family. CysN/NodQ subfamily. As to quaternary structure, heterodimer composed of CysD, the smaller subunit, and CysN.

The enzyme catalyses sulfate + ATP + H(+) = adenosine 5'-phosphosulfate + diphosphate. The protein operates within sulfur metabolism; hydrogen sulfide biosynthesis; sulfite from sulfate: step 1/3. Functionally, with CysD forms the ATP sulfurylase (ATPS) that catalyzes the adenylation of sulfate producing adenosine 5'-phosphosulfate (APS) and diphosphate, the first enzymatic step in sulfur assimilation pathway. APS synthesis involves the formation of a high-energy phosphoric-sulfuric acid anhydride bond driven by GTP hydrolysis by CysN coupled to ATP hydrolysis by CysD. This chain is Sulfate adenylyltransferase subunit 1, found in Salmonella gallinarum (strain 287/91 / NCTC 13346).